Consider the following 608-residue polypeptide: 65-kDa microtubule-associated protein 6 (608 aa).

Coiled coils occupy residues 164 to 186 (DLTL…EKSD), 368 to 388 (ELLA…QSRK), and 467 to 503 (VRLV…LLTQ). The segment at 501 to 565 (LTQRESIYGS…RSYSGHHRQN (65 aa)) is disordered. Residues 510 to 523 (SKPSPRRSSSFRKP) show a composition bias toward low complexity. Ser513 is modified (phosphoserine). The span at 526–535 (FNISNGNGSV) shows a compositional bias: polar residues. Phosphoserine is present on Ser604.

This sequence belongs to the MAP65/ASE1 family. As to quaternary structure, forms a dimer. Binds to polymerized centrally located endocytic MT.

It is found in the nucleus. The protein resides in the cytoplasm. The protein localises to the mitochondrion. Its subcellular location is the cytoskeleton. It localises to the phragmoplast. Its function is as follows. Microtubule-associated protein that mediates the formation of a mesh-like stable and dense network formed by individual microtubules (MT). Confers MT resistance to high concentration of NaCl. This chain is 65-kDa microtubule-associated protein 6 (MAP65-6), found in Arabidopsis thaliana (Mouse-ear cress).